The following is a 265-amino-acid chain: MILVFDVGNTNIVLGVYRGKELIENWRIATDKDKSSDEYAMVIHQFFHYNGLNIHDVDDVIISSVVPNIMYSLENASRKLFKREPLIVGSGIKTGMNIKYDDPKQVGADRIVNAIAAYEKYGGPLIIVDFGTATTFCAVSEDGEYLGGAISPGIKISSEALFEKAAKLPRVELINPKKVICKNTVSSMQAGIVYGYIGLVENIVRNMKKELKSSSCKVIATGGLSTLIAGGTDSIDVVDKFLSLDGLNIIYERNRKDRILSNKKS.

ATP is bound at residue 6 to 13 (DVGNTNIV). Residues tyrosine 100 and 107–110 (GADR) each bind substrate. The Proton acceptor role is filled by aspartate 109. Aspartate 129 serves as a coordination point for K(+). Residue threonine 132 coordinates ATP. Residue threonine 184 coordinates substrate.

This sequence belongs to the type III pantothenate kinase family. Homodimer. NH4(+) is required as a cofactor. Requires K(+) as cofactor.

Its subcellular location is the cytoplasm. The catalysed reaction is (R)-pantothenate + ATP = (R)-4'-phosphopantothenate + ADP + H(+). It participates in cofactor biosynthesis; coenzyme A biosynthesis; CoA from (R)-pantothenate: step 1/5. In terms of biological role, catalyzes the phosphorylation of pantothenate (Pan), the first step in CoA biosynthesis. This is Type III pantothenate kinase from Alkaliphilus oremlandii (strain OhILAs) (Clostridium oremlandii (strain OhILAs)).